The sequence spans 183 residues: Small ribosomal subunit protein bS20c (183 aa).

The N-terminal 68 residues, 1 to 68 (MAAISMACVS…FQRRGFSVVC (68 aa)), are a transit peptide targeting the chloroplast. A disordered region spans residues 79 to 99 (AAKRTRQAETRRLRNKARKSE).

Component of the chloroplast small ribosomal subunit (SSU). Mature 70S chloroplast ribosomes of higher plants consist of a small (30S) and a large (50S) subunit. The 30S small subunit contains 1 molecule of ribosomal RNA (16S rRNA) and 24 different proteins. The 50S large subunit contains 3 rRNA molecules (23S, 5S and 4.5S rRNA) and 33 different proteins.

It localises to the plastid. The protein resides in the chloroplast. Its function is as follows. Component of the chloroplast ribosome (chloro-ribosome), a dedicated translation machinery responsible for the synthesis of chloroplast genome-encoded proteins, including proteins of the transcription and translation machinery and components of the photosynthetic apparatus. This Spinacia oleracea (Spinach) protein is Small ribosomal subunit protein bS20c (RPS20).